The primary structure comprises 183 residues: dTDP-4-dehydrorhamnose 3,5-epimerase (183 aa).

Substrate-binding positions include Arg-24, Glu-29, 48–50, and Arg-60; that span reads QDN. His-63 functions as the Proton acceptor in the catalytic mechanism. Residues Lys-73 and His-120 each contribute to the substrate site. Tyr-133 serves as the catalytic Proton donor. Substrate is bound by residues Glu-144 and Lys-169.

The protein belongs to the dTDP-4-dehydrorhamnose 3,5-epimerase family. Homodimer.

It carries out the reaction dTDP-4-dehydro-6-deoxy-alpha-D-glucose = dTDP-4-dehydro-beta-L-rhamnose. Its pathway is carbohydrate biosynthesis; dTDP-L-rhamnose biosynthesis. The protein operates within bacterial outer membrane biogenesis; LPS O-antigen biosynthesis. Catalyzes the epimerization of the C3' and C5'positions of dTDP-6-deoxy-D-xylo-4-hexulose, forming dTDP-6-deoxy-L-lyxo-4-hexulose. The polypeptide is dTDP-4-dehydrorhamnose 3,5-epimerase (Salmonella typhimurium (strain LT2 / SGSC1412 / ATCC 700720)).